We begin with the raw amino-acid sequence, 150 residues long: D-aminoacyl-tRNA deacylase (150 aa).

Positions 138–139 (GP) match the Gly-cisPro motif, important for rejection of L-amino acids motif.

Belongs to the DTD family. Homodimer.

It localises to the cytoplasm. The enzyme catalyses glycyl-tRNA(Ala) + H2O = tRNA(Ala) + glycine + H(+). It carries out the reaction a D-aminoacyl-tRNA + H2O = a tRNA + a D-alpha-amino acid + H(+). In terms of biological role, an aminoacyl-tRNA editing enzyme that deacylates mischarged D-aminoacyl-tRNAs. Also deacylates mischarged glycyl-tRNA(Ala), protecting cells against glycine mischarging by AlaRS. Acts via tRNA-based rather than protein-based catalysis; rejects L-amino acids rather than detecting D-amino acids in the active site. By recycling D-aminoacyl-tRNA to D-amino acids and free tRNA molecules, this enzyme counteracts the toxicity associated with the formation of D-aminoacyl-tRNA entities in vivo and helps enforce protein L-homochirality. The polypeptide is D-aminoacyl-tRNA deacylase (Parabacteroides distasonis (strain ATCC 8503 / DSM 20701 / CIP 104284 / JCM 5825 / NCTC 11152)).